Here is a 120-residue protein sequence, read N- to C-terminus: Small ribosomal subunit protein uS10 (120 aa).

Residues serine 16 and serine 18 each carry the phosphoserine modification.

It belongs to the universal ribosomal protein uS10 family. Expressed ubiquitously in embryos, highest expression is in the midgut.

This is Small ribosomal subunit protein uS10 (RpS20) from Drosophila melanogaster (Fruit fly).